Reading from the N-terminus, the 182-residue chain is Probable nicotinate-nucleotide adenylyltransferase (182 aa).

This sequence belongs to the NadD family.

It carries out the reaction nicotinate beta-D-ribonucleotide + ATP + H(+) = deamido-NAD(+) + diphosphate. It participates in cofactor biosynthesis; NAD(+) biosynthesis; deamido-NAD(+) from nicotinate D-ribonucleotide: step 1/1. Catalyzes the reversible adenylation of nicotinate mononucleotide (NaMN) to nicotinic acid adenine dinucleotide (NaAD). The sequence is that of Probable nicotinate-nucleotide adenylyltransferase from Aliarcobacter butzleri (strain RM4018) (Arcobacter butzleri).